We begin with the raw amino-acid sequence, 338 residues long: Sorting nexin-15 (338 aa).

Positions 1-131 (MSRRAKKDDF…EFFRGGEVTR (131 aa)) constitute a PX domain. A 1,2-diacyl-sn-glycero-3-phospho-(1D-myo-inositol-3-phosphate) contacts are provided by R52, S54, R88, and R97. R106 bears the Omega-N-methylarginine mark. The disordered stretch occupies residues 134–155 (EVSRDLQILPPPLIPTPPSDEA). The segment covering 142-151 (LPPPLIPTPP) has biased composition (pro residues). S202 and S228 each carry phosphoserine. The disordered stretch occupies residues 240–270 (VQSKRLDQEPWEPGGREEEEAEDGDPAPAYL). Positions 266–338 (APAYLGQATE…RAETLHAHLP (73 aa)) constitute an MIT domain.

The protein belongs to the sorting nexin family. In terms of assembly, homodimer. Interacts with SNX1, SNX2 and SNX4.

Its subcellular location is the cytoplasm. It localises to the membrane. The protein resides in the cytoplasmic vesicle membrane. Its function is as follows. May be involved in several stages of intracellular trafficking. Overexpression of SNX15 disrupts the normal trafficking of proteins from the plasma membrane to recycling endosomes or the TGN. The polypeptide is Sorting nexin-15 (Snx15) (Rattus norvegicus (Rat)).